We begin with the raw amino-acid sequence, 399 residues long: Bone morphogenetic protein 8A (399 aa).

Residues 1-19 (MAMRPGPLWLLGLALCALG) form the signal peptide. Positions 20 to 260 (GGHGPRPPHT…ASQSPVRAPR (241 aa)) are excised as a propeptide. Residue asparagine 155 is glycosylated (N-linked (GlcNAc...) asparagine). Residues 257-286 (RAPRAARPLKRRQPKKTNELPHPNKLPGIF) form a disordered region. 3 cysteine pairs are disulfide-bonded: cysteine 298–cysteine 364, cysteine 327–cysteine 396, and cysteine 331–cysteine 398. A glycan (N-linked (GlcNAc...) asparagine) is linked at asparagine 340.

This sequence belongs to the TGF-beta family. As to quaternary structure, homodimer; disulfide-linked. Expressed in testis. expressed in trophoblast cells of the labyrinthine region of the placenta and in the inner root sheath of hair follicles of early postnatal skin. Expressed predominantly in the neonatal mouse spermatogonia.

It localises to the secreted. Functionally, growth factor of the TGF-beta superfamily that plays important role in various biological processes, including spermatogenesis, osteogenesis, steroidogenesis as well as regulation of energy balance. Initiates the canonical BMP signaling cascade by associating with type I receptor BMPR1A and type II receptor BMPR2. Once all three components are bound together in a complex at the cell surface, BMPR2 phosphorylates and activates BMPR1A. In turn, BMPR1A propagates signal by phosphorylating SMAD1/5/8 that travel to the nucleus and act as activators and repressors of transcription of target genes. In addition, activates the SMAD2/3 pathway. This is Bone morphogenetic protein 8A (Bmp8a) from Mus musculus (Mouse).